Here is a 1203-residue protein sequence, read N- to C-terminus: DNA-directed RNA polymerase subunit beta' (1203 aa).

Residues cysteine 60, cysteine 62, cysteine 75, and cysteine 78 each contribute to the Zn(2+) site. Mg(2+)-binding residues include aspartate 449, aspartate 451, and aspartate 453. Zn(2+) contacts are provided by cysteine 818, cysteine 892, cysteine 899, and cysteine 902.

The protein belongs to the RNA polymerase beta' chain family. As to quaternary structure, the RNAP catalytic core consists of 2 alpha, 1 beta, 1 beta' and 1 omega subunit. When a sigma factor is associated with the core the holoenzyme is formed, which can initiate transcription. Mg(2+) is required as a cofactor. The cofactor is Zn(2+).

The catalysed reaction is RNA(n) + a ribonucleoside 5'-triphosphate = RNA(n+1) + diphosphate. In terms of biological role, DNA-dependent RNA polymerase catalyzes the transcription of DNA into RNA using the four ribonucleoside triphosphates as substrates. This Bacillus cereus (strain ATCC 10987 / NRS 248) protein is DNA-directed RNA polymerase subunit beta'.